A 248-amino-acid polypeptide reads, in one-letter code: CKLF-like MARVEL transmembrane domain-containing protein 2 (248 aa).

The segment at M1–G63 is disordered. Residues E12–A22 show a composition bias toward pro residues. Positions K23 to G63 are enriched in basic and acidic residues. The region spanning F82–R204 is the MARVEL domain. 3 helical membrane passes run L116–I136, I147–A167, and Y178–L198. The interval A208–K248 is disordered. The span at P231–K248 shows a compositional bias: pro residues.

Belongs to the chemokine-like factor family. As to expression, highly expressed in testis.

It localises to the membrane. This Homo sapiens (Human) protein is CKLF-like MARVEL transmembrane domain-containing protein 2 (CMTM2).